A 326-amino-acid chain; its full sequence is Type II methyltransferase M.EcoRI (326 aa).

The protein belongs to the N(4)/N(6)-methyltransferase family. As to quaternary structure, monomer.

It carries out the reaction a 2'-deoxyadenosine in DNA + S-adenosyl-L-methionine = an N(6)-methyl-2'-deoxyadenosine in DNA + S-adenosyl-L-homocysteine + H(+). Functionally, a methylase that recognizes the double-stranded sequence 5'-GAATTC-3', methylates A-3 on both strands, and protects the DNA from cleavage by the EcoRI endonuclease. This chain is Type II methyltransferase M.EcoRI (ecoRIM), found in Escherichia coli.